We begin with the raw amino-acid sequence, 201 residues long: IDLSRF-like peptide (201 aa).

The first 28 residues, 1-28 (MVRRFCNGAVALGIALTACAAFPRAIMA), serve as a signal peptide directing secretion. A propeptide spanning residues 43–201 (SDACHPYEPF…EKLVKTGFLD (159 aa)) is cleaved from the precursor. One can recognise an LDL-receptor class A domain in the interval 45–85 (ACHPYEPFKCPGDGLCISIQYLCDGAPDCQDGYDEDSRLCT). Intrachain disulfides connect C46/C60, C54/C73, and C67/C84.

Expressed in central brain, antennal and optical lobes, in gnathal, thoracic and abdominal ganglia and in the retrocerebral complex (at protein level).

The protein resides in the secreted. The protein is IDLSRF-like peptide of Camponotus floridanus (Florida carpenter ant).